A 482-amino-acid polypeptide reads, in one-letter code: Kynurenine 3-monooxygenase (482 aa).

Belongs to the aromatic-ring hydroxylase family. KMO subfamily. Requires FAD as cofactor.

The protein resides in the mitochondrion outer membrane. The enzyme catalyses L-kynurenine + NADPH + O2 + H(+) = 3-hydroxy-L-kynurenine + NADP(+) + H2O. The protein operates within cofactor biosynthesis; NAD(+) biosynthesis; quinolinate from L-kynurenine: step 1/3. Functionally, catalyzes the hydroxylation of L-kynurenine (L-Kyn) to form 3-hydroxy-L-kynurenine (L-3OHKyn). Required for synthesis of quinolinic acid. In Phaeosphaeria nodorum (strain SN15 / ATCC MYA-4574 / FGSC 10173) (Glume blotch fungus), this protein is Kynurenine 3-monooxygenase.